A 427-amino-acid polypeptide reads, in one-letter code: Glucose-1-phosphate adenylyltransferase (427 aa).

Residues Tyr112, Gly177, 192-193 (EK), and Ser210 contribute to the alpha-D-glucose 1-phosphate site.

The protein belongs to the bacterial/plant glucose-1-phosphate adenylyltransferase family. As to quaternary structure, homotetramer.

The catalysed reaction is alpha-D-glucose 1-phosphate + ATP + H(+) = ADP-alpha-D-glucose + diphosphate. Its pathway is glycan biosynthesis; glycogen biosynthesis. Involved in the biosynthesis of ADP-glucose, a building block required for the elongation reactions to produce glycogen. Catalyzes the reaction between ATP and alpha-D-glucose 1-phosphate (G1P) to produce pyrophosphate and ADP-Glc. This Methylobacillus flagellatus (strain ATCC 51484 / DSM 6875 / VKM B-1610 / KT) protein is Glucose-1-phosphate adenylyltransferase.